The following is a 65-amino-acid chain: DNA-directed RNA polymerase subunit omega (65 aa).

Belongs to the RNA polymerase subunit omega family. In terms of assembly, the RNAP catalytic core consists of 2 alpha, 1 beta, 1 beta' and 1 omega subunit. When a sigma factor is associated with the core the holoenzyme is formed, which can initiate transcription.

The enzyme catalyses RNA(n) + a ribonucleoside 5'-triphosphate = RNA(n+1) + diphosphate. Promotes RNA polymerase assembly. Latches the N- and C-terminal regions of the beta' subunit thereby facilitating its interaction with the beta and alpha subunits. The protein is DNA-directed RNA polymerase subunit omega of Baumannia cicadellinicola subsp. Homalodisca coagulata.